We begin with the raw amino-acid sequence, 129 residues long: Phosphoribosyl-AMP cyclohydrolase (129 aa).

Mg(2+) is bound at residue aspartate 77. Cysteine 78 contacts Zn(2+). Aspartate 79 and aspartate 81 together coordinate Mg(2+). Zn(2+) is bound by residues cysteine 94 and cysteine 101.

The protein belongs to the PRA-CH family. Homodimer. It depends on Mg(2+) as a cofactor. Requires Zn(2+) as cofactor.

The protein localises to the cytoplasm. The catalysed reaction is 1-(5-phospho-beta-D-ribosyl)-5'-AMP + H2O = 1-(5-phospho-beta-D-ribosyl)-5-[(5-phospho-beta-D-ribosylamino)methylideneamino]imidazole-4-carboxamide. The protein operates within amino-acid biosynthesis; L-histidine biosynthesis; L-histidine from 5-phospho-alpha-D-ribose 1-diphosphate: step 3/9. In terms of biological role, catalyzes the hydrolysis of the adenine ring of phosphoribosyl-AMP. The chain is Phosphoribosyl-AMP cyclohydrolase from Pelotomaculum thermopropionicum (strain DSM 13744 / JCM 10971 / SI).